The primary structure comprises 780 residues: Vacuolar protein sorting-associated protein 51 homolog (780 aa).

At Ala-2 the chain carries N-acetylalanine. 2 disordered regions span residues 270-292 (STLV…PAKI) and 615-651 (QGTF…SNSQ). Residues 273-284 (VEDDDSSNDTES) show a composition bias toward acidic residues. Residues 626-639 (SNGSNTTTSSRSNT) show a composition bias toward low complexity.

Belongs to the VPS51 family. Component of the Golgi-associated retrograde protein (GARP) complex, composed by VPS51, VPS52, VPS53 and VPS54. Component of the endosome-associated retrograde protein (EARP) complex, composed of VPS51, VPS52, VPS53 and VPS50. Interacts with VPS52. In terms of tissue distribution, expressed in primary and lateral roots, shoots of seedlings and flowers.

The protein localises to the golgi apparatus. It localises to the trans-Golgi network. The protein resides in the recycling endosome. Its subcellular location is the prevacuolar compartment. Acts as a component of the GARP complex that is involved in retrograde transport from early and late endosomes to the trans-Golgi network (TGN). The GARP complex is required for the maintenance of protein retrieval from endosomes to the TGN, acid hydrolase sorting, lysosome function, endosomal cholesterol traffic and autophagy. VPS51 participates in retrograde transport of acid hydrolase receptors, likely by promoting tethering and SNARE-dependent fusion of endosome-derived carriers to the TGN. Acts as a component of the EARP complex that is involved in endocytic recycling. The EARP complex associates with Rab4-positive endosomes and promotes recycling of internalized transferrin receptor (TFRC) to the plasma membrane. Required for vacuolar targeting and cellular trafficking. Involved in the regulation of vascular tissue patterning, probably by regulating PIN1 expression pattern, thus modulating auxin flux. Important to prevent PIN1 accumulation within margin cells, possibly by targeting PIN1 to the lytic vacuole. Regulates PIN1 and ATHB8 expression pattern in secondary veins. The polypeptide is Vacuolar protein sorting-associated protein 51 homolog (Arabidopsis thaliana (Mouse-ear cress)).